Here is a 506-residue protein sequence, read N- to C-terminus: Maturase K (506 aa).

The protein belongs to the intron maturase 2 family. MatK subfamily.

Its subcellular location is the plastid. The protein resides in the chloroplast. In terms of biological role, usually encoded in the trnK tRNA gene intron. Probably assists in splicing its own and other chloroplast group II introns. In Arabis alpina (Alpine rock-cress), this protein is Maturase K.